The primary structure comprises 406 residues: Argininosuccinate synthase (406 aa).

ATP-binding positions include 11–19 (AYSGGLDTS) and A38. The L-citrulline site is built by Y91 and S96. G121 lines the ATP pocket. Residues T123, N127, and D128 each coordinate L-aspartate. Residue N127 coordinates L-citrulline. L-citrulline is bound by residues R131, S181, S190, E266, and Y278.

It belongs to the argininosuccinate synthase family. Type 1 subfamily. Homotetramer.

The protein resides in the cytoplasm. The catalysed reaction is L-citrulline + L-aspartate + ATP = 2-(N(omega)-L-arginino)succinate + AMP + diphosphate + H(+). It functions in the pathway amino-acid biosynthesis; L-arginine biosynthesis; L-arginine from L-ornithine and carbamoyl phosphate: step 2/3. The sequence is that of Argininosuccinate synthase from Campylobacter jejuni subsp. jejuni serotype O:2 (strain ATCC 700819 / NCTC 11168).